Reading from the N-terminus, the 118-residue chain is Basic phospholipase A2 PA-11 (118 aa).

Cystine bridges form between Cys11-Cys71, Cys27-Cys117, Cys29-Cys45, Cys44-Cys98, Cys51-Cys91, Cys60-Cys84, and Cys78-Cys89. Residues Tyr28, Gly30, and Gly32 each coordinate Ca(2+). His48 is a catalytic residue. Asp49 serves as a coordination point for Ca(2+). Asp92 is a catalytic residue.

The protein belongs to the phospholipase A2 family. Group I subfamily. D49 sub-subfamily. Ca(2+) is required as a cofactor. Expressed by the venom gland.

The protein resides in the secreted. The enzyme catalyses a 1,2-diacyl-sn-glycero-3-phosphocholine + H2O = a 1-acyl-sn-glycero-3-phosphocholine + a fatty acid + H(+). Its function is as follows. PLA2 catalyzes the calcium-dependent hydrolysis of the 2-acyl groups in 3-sn-phosphoglycerides. This is Basic phospholipase A2 PA-11 from Pseudechis australis (Mulga snake).